A 399-amino-acid polypeptide reads, in one-letter code: Probable dual-specificity RNA methyltransferase RlmN (399 aa).

Glu-102 serves as the catalytic Proton acceptor. Residues 108-385 (YLDRATVCVS…CTVRVERGVA (278 aa)) form the Radical SAM core domain. Cysteines 115 and 390 form a disulfide. Residues Cys-122, Cys-126, and Cys-129 each contribute to the [4Fe-4S] cluster site. S-adenosyl-L-methionine-binding positions include 207–208 (GE), Ser-239, 262–264 (SLH), and Asn-347. Cys-390 acts as the S-methylcysteine intermediate in catalysis.

The protein belongs to the radical SAM superfamily. RlmN family. [4Fe-4S] cluster serves as cofactor.

Its subcellular location is the cytoplasm. It carries out the reaction adenosine(2503) in 23S rRNA + 2 reduced [2Fe-2S]-[ferredoxin] + 2 S-adenosyl-L-methionine = 2-methyladenosine(2503) in 23S rRNA + 5'-deoxyadenosine + L-methionine + 2 oxidized [2Fe-2S]-[ferredoxin] + S-adenosyl-L-homocysteine. It catalyses the reaction adenosine(37) in tRNA + 2 reduced [2Fe-2S]-[ferredoxin] + 2 S-adenosyl-L-methionine = 2-methyladenosine(37) in tRNA + 5'-deoxyadenosine + L-methionine + 2 oxidized [2Fe-2S]-[ferredoxin] + S-adenosyl-L-homocysteine. Its function is as follows. Specifically methylates position 2 of adenine 2503 in 23S rRNA and position 2 of adenine 37 in tRNAs. This Roseiflexus castenholzii (strain DSM 13941 / HLO8) protein is Probable dual-specificity RNA methyltransferase RlmN.